Reading from the N-terminus, the 397-residue chain is Succinate--CoA ligase [ADP-forming] subunit beta (397 aa).

Residues K9 to Q244 form the ATP-grasp domain. ATP contacts are provided by residues K46, G53–G55, E99, L102, and E107. Residues N199 and D213 each contribute to the Mg(2+) site. Residues N264 and G321–M323 each bind substrate.

Belongs to the succinate/malate CoA ligase beta subunit family. Heterotetramer of two alpha and two beta subunits. The cofactor is Mg(2+).

The catalysed reaction is succinate + ATP + CoA = succinyl-CoA + ADP + phosphate. It carries out the reaction GTP + succinate + CoA = succinyl-CoA + GDP + phosphate. The protein operates within carbohydrate metabolism; tricarboxylic acid cycle; succinate from succinyl-CoA (ligase route): step 1/1. Its function is as follows. Succinyl-CoA synthetase functions in the citric acid cycle (TCA), coupling the hydrolysis of succinyl-CoA to the synthesis of either ATP or GTP and thus represents the only step of substrate-level phosphorylation in the TCA. The beta subunit provides nucleotide specificity of the enzyme and binds the substrate succinate, while the binding sites for coenzyme A and phosphate are found in the alpha subunit. The sequence is that of Succinate--CoA ligase [ADP-forming] subunit beta from Alkaliphilus metalliredigens (strain QYMF).